The sequence spans 185 residues: Ribosome-recycling factor (185 aa).

The segment at 145 to 164 is disordered; that stretch reads DGEAGEDEVSRAEKDLDKTT.

Belongs to the RRF family.

It is found in the cytoplasm. In terms of biological role, responsible for the release of ribosomes from messenger RNA at the termination of protein biosynthesis. May increase the efficiency of translation by recycling ribosomes from one round of translation to another. The chain is Ribosome-recycling factor from Mycobacterium sp. (strain JLS).